Consider the following 198-residue polypeptide: Probable chemoreceptor glutamine deamidase CheD (198 aa).

Belongs to the CheD family.

The enzyme catalyses L-glutaminyl-[protein] + H2O = L-glutamyl-[protein] + NH4(+). In terms of biological role, probably deamidates glutamine residues to glutamate on methyl-accepting chemotaxis receptors (MCPs), playing an important role in chemotaxis. The protein is Probable chemoreceptor glutamine deamidase CheD of Xanthomonas campestris pv. campestris (strain 8004).